A 385-amino-acid polypeptide reads, in one-letter code: Serpin-Z1 (385 aa).

The RCL stretch occupies residues G317 to K341.

It belongs to the serpin family.

Probable serine protease inhibitor. This chain is Serpin-Z1, found in Arabidopsis thaliana (Mouse-ear cress).